Here is an 804-residue protein sequence, read N- to C-terminus: Mechanosensitive cation channel TMEM63A (804 aa).

Residues 1 to 51 are Extracellular-facing; the sequence is MTSSPFLDPWPSKAVFVRERLGLGERPNDSYCYNSAKNSTVLQGVTFGGIP. A glycan (N-linked (GlcNAc...) asparagine) is linked at Asn-38. The chain crosses the membrane as a helical span at residues 52–74; the sequence is TVLLLDVSCFLFLILVFSIIRRR. The Cytoplasmic portion of the chain corresponds to 75–133; sequence FWDYGRIALVSEAGSEARFQRLSSSSSGQQDFENELGCCPWLTAIFRLHDDQILEWCGE. A helical membrane pass occupies residues 134-166; that stretch reads DAIHYLSFQRHIIFLLVVISFLSLCVILPVNLS. Over 167–190 the chain is Extracellular; sequence GDLLGKDPYSFGRTTIANLQTDND. A helical membrane pass occupies residues 191 to 216; sequence LLWLHTVFSVIYLFLTVGFMWHHTRS. The Cytoplasmic portion of the chain corresponds to 217-415; that stretch reads IRYKEESLVR…CWKNLSIQGV (199 aa). Residues 218 to 413 are intracellular linker IL2; confers mechanosensitivity; that stretch reads RYKEESLVRQ…DICWKNLSIQ (196 aa). Residues 416 to 443 form a helical membrane-spanning segment; the sequence is RWWLQWLGINFSLFVVLFFLTTPSIIMS. The Extracellular portion of the chain corresponds to 444–461; sequence TMDKFNVTKPIHALNNPV. An N-linked (GlcNAc...) asparagine glycan is attached at Asn-449. The helical transmembrane segment at 462-489 threads the bilayer; sequence ISQFFPTLLLWSFSALLPSIVYYSTLLE. Residues 490-494 are Cytoplasmic-facing; that stretch reads SHWTR. The helical transmembrane segment at 495 to 531 threads the bilayer; sequence SGENRIMVSKVYIFLIFMVLILPSLGLTSLDFFFRWL. At 532-553 the chain is on the extracellular side; sequence FDKTSSETSIRLECVFLPDQGA. A helical membrane pass occupies residues 554–585; that stretch reads FFVNYVIASAFIGSGMELLRLPGLILYTFRMI. The tract at residues 554-585 is gating helix; sequence FFVNYVIASAFIGSGMELLRLPGLILYTFRMI. Residues 586-605 lie on the Cytoplasmic side of the membrane; it reads MAKTAADRRNVKQNQAFEYE. Residues 606 to 623 form a helical membrane-spanning segment; that stretch reads FGAMYAWMLCVFTVIMAY. Topologically, residues 624–627 are extracellular; that stretch reads SITC. The chain crosses the membrane as a helical span at residues 628 to 650; that stretch reads PIIVPFGLIYILLKHMVDRHNLY. At 651 to 660 the chain is on the cytoplasmic side; the sequence is FAYLPAKLEK. Residues 661-688 form a helical membrane-spanning segment; sequence RIHFAAVNQALAAPILCLFWLFFFSFLR. Residues 689-693 are Extracellular-facing; it reads LGLTA. A helical membrane pass occupies residues 694–708; that stretch reads PATLFTFLVVLLTIL. At 709–804 the chain is on the cytoplasmic side; sequence ACLLYTCFGC…GTAAYAYQES (96 aa). Position 738 is a phosphoserine (Ser-738).

It belongs to the CSC1 (TC 1.A.17) family. As to quaternary structure, monomer. In terms of processing, N-Glycosylated.

It localises to the lysosome membrane. The protein localises to the early endosome membrane. It is found in the cell membrane. It catalyses the reaction Ca(2+)(in) = Ca(2+)(out). Its function is as follows. Mechanosensitive cation channel with low conductance and high activation threshold. In contrast to TMEM63B, does not show phospholipid scramblase activity. Acts as a regulator of lysosomal morphology by mediating lysosomal mechanosensitivity. Important for the baby's first breath and respiration throughout life. Upon lung inflation conducts cation currents in alveolar type 1 and 2 cells triggering lamellar body exocytosis and surfactant secretion into airspace. Also acts as an osmosensitive cation channel preferentially activated by hypotonic stress. In Mus musculus (Mouse), this protein is Mechanosensitive cation channel TMEM63A.